The primary structure comprises 347 residues: Putative adhesin P1-like protein MPN_099 (347 aa).

Over residues 282–300 (FGTDHSTQPQPQSLKTTTP) the composition is skewed to polar residues. Positions 282 to 302 (FGTDHSTQPQPQSLKTTTPVF) are disordered.

This sequence belongs to the adhesin P1 family.

The chain is Putative adhesin P1-like protein MPN_099 from Mycoplasma pneumoniae (strain ATCC 29342 / M129 / Subtype 1) (Mycoplasmoides pneumoniae).